A 177-amino-acid polypeptide reads, in one-letter code: Peptide methionine sulfoxide reductase MsrA 2 (177 aa).

The active site involves cysteine 12.

Belongs to the MsrA Met sulfoxide reductase family.

The catalysed reaction is L-methionyl-[protein] + [thioredoxin]-disulfide + H2O = L-methionyl-(S)-S-oxide-[protein] + [thioredoxin]-dithiol. It carries out the reaction [thioredoxin]-disulfide + L-methionine + H2O = L-methionine (S)-S-oxide + [thioredoxin]-dithiol. Functionally, has an important function as a repair enzyme for proteins that have been inactivated by oxidation. Catalyzes the reversible oxidation-reduction of methionine sulfoxide in proteins to methionine. This is Peptide methionine sulfoxide reductase MsrA 2 from Staphylococcus aureus (strain MRSA252).